A 320-amino-acid chain; its full sequence is Ferrochelatase (320 aa).

Fe cation-binding residues include His194 and Glu275.

Belongs to the ferrochelatase family.

Its subcellular location is the cytoplasm. The enzyme catalyses heme b + 2 H(+) = protoporphyrin IX + Fe(2+). The protein operates within porphyrin-containing compound metabolism; protoheme biosynthesis; protoheme from protoporphyrin-IX: step 1/1. In terms of biological role, catalyzes the ferrous insertion into protoporphyrin IX. The chain is Ferrochelatase from Cronobacter sakazakii (strain ATCC BAA-894) (Enterobacter sakazakii).